We begin with the raw amino-acid sequence, 74 residues long: Cytoplasmic envelopment protein 3 (74 aa).

Gly-2 carries the N-myristoyl glycine; by host lipid modification. Positions 15–16 (LV) match the Di-leucine-like internalization motif motif. The interval 34-40 (SMEEFDI) is asp/Glu-rich (acidic). Residues 36-74 (EEFDIPPPPPLPKPVFKQPGPYKIPARSQRCPSKRRDPY) form a disordered region.

Belongs to the herpesviridae cytoplasmic envelopment protein 3 family. As to quaternary structure, interacts with cytoplasmic envelopment protein 2; this interaction is essential for the proper localization of each protein to the assembly complex and thus for the production of infectious virus. Post-translationally, myristoylation and palmitoylation (probably on one or more of the nearby cysteines at the N-terminus) enable membrane-binding and Golgi apparatus-specific targeting and are essential for efficient packaging. In terms of processing, phosphorylated. Phosphorylation does not seem to be required for recycling to the host Golgi apparatus. Packaging is selective for underphosphorylated forms.

The protein localises to the virion tegument. It localises to the virion membrane. It is found in the host cell membrane. The protein resides in the host Golgi apparatus membrane. In terms of biological role, plays an important role in the cytoplasmic envelopment of tegument proteins and capsids during the assembly and egress processes. Also participates in viral entry at the fusion step probably by regulating the core fusion machinery. In Equine herpesvirus 1 (strain Ab4p) (EHV-1), this protein is Cytoplasmic envelopment protein 3.